A 189-amino-acid chain; its full sequence is FAS1 domain-containing protein mug57 (189 aa).

Positions 1-24 (MMKLFCLNIFRFLYTTSFISAVLS) are cleaved as a signal peptide. The region spanning 37–182 (EPRLFELLAE…GEMWVLNATL (146 aa)) is the FAS1 domain.

The protein resides in the cytoplasm. Its subcellular location is the nucleus. It is found in the membrane. In terms of biological role, has a role in sporulation. This Schizosaccharomyces pombe (strain 972 / ATCC 24843) (Fission yeast) protein is FAS1 domain-containing protein mug57 (mug57).